The sequence spans 349 residues: Protein O-mannose kinase (349 aa).

Residues 1–19 (MGQQHGTRNGLTHRELPRG) lie on the Cytoplasmic side of the membrane. A helical; Signal-anchor for type II membrane protein membrane pass occupies residues 20-42 (VGLLLAMALMNVALYLCLDQLFI). The Lumenal segment spans residues 43 to 349 (SPGRSTADSR…TVMSQTKEML (307 aa)). Asn-66, Asn-164, and Asn-219 each carry an N-linked (GlcNAc...) asparagine glycan. The Protein kinase domain maps to 80–349 (VRQLKRVGEG…TVMSQTKEML (270 aa)).

It belongs to the protein kinase superfamily. Ser/Thr protein kinase family. STKL subfamily.

It localises to the endoplasmic reticulum membrane. It carries out the reaction 3-O-[beta-D-GalNAc-(1-&gt;3)-beta-D-GlcNAc-(1-&gt;4)-alpha-D-Man]-L-Thr-[protein] + ATP = 3-O-[beta-D-GalNAc-(1-&gt;3)-beta-D-GlcNAc-(1-&gt;4)-(O-6-P-alpha-D-Man)]-Thr-[protein] + ADP + H(+). In terms of biological role, protein O-mannose kinase that specifically mediates phosphorylation at the 6-position of an O-mannose of the trisaccharide (N-acetylgalactosamine (GalNAc)-beta-1,3-N-acetylglucosamine (GlcNAc)-beta-1,4-mannose) to generate phosphorylated O-mannosyl trisaccharide (N-acetylgalactosamine-beta-1,3-N-acetylglucosamine-beta-1,4-(phosphate-6-)mannose). Phosphorylated O-mannosyl trisaccharide is a carbohydrate structure present in alpha-dystroglycan (DAG1), which is required for binding laminin G-like domain-containing extracellular proteins with high affinity. Only shows kinase activity when the GalNAc-beta-3-GlcNAc-beta-terminus is linked to the 4-position of O-mannose, suggesting that this disaccharide serves as the substrate recognition motif. This is Protein O-mannose kinase (Pomk) from Mus musculus (Mouse).